The primary structure comprises 637 residues: MLQQIRGPADLQHLSQAQLRELAQEIREFLVHKVAATGGHLGPNLGVVELTLALHRVFDSPHDPIIFDTGHQTYVHKMLTGRAQDFESLRKKGGLSGYPCRAESEHDWVESSHASAALSYADGLSKAFELSGLRNRHVVAVVGDGALTGGMCWEALNNIAASHRPVVIVVNDNGRSYAPTIGGVADHLAKLRLQPAYEQVLEKGRDVVRAVPLVGEVCYHFMHSVKAGIKDSLSPQLLFTDLGLKYVGPVDGHDERAVEVALRSARGFGGPVIVHVVTRKGMGYGPAEADVAEQMHSTVPIDPATGQATKLAGPGWTTTFADALIEYAGKRRDIVAITAAMPGPTGLTAFGQQFPDRLFDVGIAEQHAMTSAAGLAMGGMHPVVAIYSTFLNRAFDQIMMDVALHQLPVTMVLDRAGITGSDGPSHNGMWDLSMLGIIPGIRVAAPRDATRLREELGEALDVDDGPTALRFPKGDVGEDIPALERRDGMDVLAVPASGLNHDVLLIAVGALASMALAVAKRLHNQGIGVTVIDPRWVLPVADGIGDLAVAHKLVVTLEDNGVNGGVGSAVSAALRRAEIGVHCRDVGLPQQFFEHASRGELLADLRLTDQDVARRVTGWVAALGACVSEAEIKEHLD.

Thiamine diphosphate contacts are provided by residues His-71 and Ser-112–Ala-114. Residue Asp-144 participates in Mg(2+) binding. Residues Gly-145 to Ala-146, Asn-173, Tyr-284, and Glu-365 contribute to the thiamine diphosphate site. Asn-173 is a binding site for Mg(2+).

It belongs to the transketolase family. DXPS subfamily. Homodimer. It depends on Mg(2+) as a cofactor. Requires thiamine diphosphate as cofactor.

It carries out the reaction D-glyceraldehyde 3-phosphate + pyruvate + H(+) = 1-deoxy-D-xylulose 5-phosphate + CO2. The protein operates within metabolic intermediate biosynthesis; 1-deoxy-D-xylulose 5-phosphate biosynthesis; 1-deoxy-D-xylulose 5-phosphate from D-glyceraldehyde 3-phosphate and pyruvate: step 1/1. Functionally, catalyzes the acyloin condensation reaction between C atoms 2 and 3 of pyruvate and glyceraldehyde 3-phosphate to yield 1-deoxy-D-xylulose-5-phosphate (DXP). This Mycobacterium ulcerans (strain Agy99) protein is 1-deoxy-D-xylulose-5-phosphate synthase.